Consider the following 158-residue polypeptide: NAD(P)H-quinone oxidoreductase subunit J, chloroplastic (158 aa).

It belongs to the complex I 30 kDa subunit family. In terms of assembly, NDH is composed of at least 16 different subunits, 5 of which are encoded in the nucleus.

It localises to the plastid. The protein localises to the chloroplast thylakoid membrane. It catalyses the reaction a plastoquinone + NADH + (n+1) H(+)(in) = a plastoquinol + NAD(+) + n H(+)(out). The catalysed reaction is a plastoquinone + NADPH + (n+1) H(+)(in) = a plastoquinol + NADP(+) + n H(+)(out). NDH shuttles electrons from NAD(P)H:plastoquinone, via FMN and iron-sulfur (Fe-S) centers, to quinones in the photosynthetic chain and possibly in a chloroplast respiratory chain. The immediate electron acceptor for the enzyme in this species is believed to be plastoquinone. Couples the redox reaction to proton translocation, and thus conserves the redox energy in a proton gradient. The polypeptide is NAD(P)H-quinone oxidoreductase subunit J, chloroplastic (Psilotum nudum (Whisk fern)).